We begin with the raw amino-acid sequence, 62 residues long: Large ribosomal subunit protein bL28 (62 aa).

A disordered region spans residues 1–24 (MARKCVITGRKTKAGNNRSHAMNS). A compositionally biased stretch (polar residues) spans 14–24 (AGNNRSHAMNS).

The protein belongs to the bacterial ribosomal protein bL28 family.

This chain is Large ribosomal subunit protein bL28, found in Bacillus pumilus (strain SAFR-032).